The chain runs to 247 residues: Isoprenyl transferase (247 aa).

Residue D18 is part of the active site. Position 18 (D18) interacts with Mg(2+). Substrate-binding positions include 19 to 22, W23, R31, H35, and 63 to 65; these read GNGR and SSE. The Proton acceptor role is filled by N66. Residues W67, R69, R186, and 192-194 contribute to the substrate site; that span reads RLS. E205 is a binding site for Mg(2+).

This sequence belongs to the UPP synthase family. In terms of assembly, homodimer. Mg(2+) serves as cofactor.

In terms of biological role, catalyzes the condensation of isopentenyl diphosphate (IPP) with allylic pyrophosphates generating different type of terpenoids. The protein is Isoprenyl transferase of Rhizobium meliloti (strain 1021) (Ensifer meliloti).